A 218-amino-acid polypeptide reads, in one-letter code: Cytochrome b6 (218 aa).

The chain crosses the membrane as a helical span at residues 35-55 (IFYCLGGITLVCFLIQFATGF). Heme c is bound at residue Cys-38. Heme b is bound by residues His-89 and His-103. The next 3 membrane-spanning stretches (helical) occupy residues 93–113 (ASMMVLMLILHVFRVYLTGGF), 119–139 (LTWVTGVTMAVITVSFGVTGY), and 189–209 (LHTFVMPWLLAVFMLMHFLMI). Residues His-190 and His-205 each contribute to the heme b site.

The protein belongs to the cytochrome b family. PetB subfamily. As to quaternary structure, the 4 large subunits of the cytochrome b6-f complex are cytochrome b6, subunit IV (17 kDa polypeptide, PetD), cytochrome f and the Rieske protein, while the 4 small subunits are PetG, PetL, PetM and PetN. The complex functions as a dimer. It depends on heme b as a cofactor. Heme c serves as cofactor.

It is found in the cellular thylakoid membrane. Functionally, component of the cytochrome b6-f complex, which mediates electron transfer between photosystem II (PSII) and photosystem I (PSI), cyclic electron flow around PSI, and state transitions. In Parasynechococcus marenigrum (strain WH8102), this protein is Cytochrome b6.